The chain runs to 387 residues: Phosphoglycerate kinase (387 aa).

Substrate contacts are provided by residues 21 to 23 (DLN), Arg-36, 59 to 62 (HLGR), Arg-113, and Arg-146. ATP-binding positions include Lys-197, Glu-314, and 340 to 343 (GGDT).

It belongs to the phosphoglycerate kinase family. As to quaternary structure, monomer.

It localises to the cytoplasm. It catalyses the reaction (2R)-3-phosphoglycerate + ATP = (2R)-3-phospho-glyceroyl phosphate + ADP. The protein operates within carbohydrate degradation; glycolysis; pyruvate from D-glyceraldehyde 3-phosphate: step 2/5. This Pseudomonas savastanoi pv. phaseolicola (strain 1448A / Race 6) (Pseudomonas syringae pv. phaseolicola (strain 1448A / Race 6)) protein is Phosphoglycerate kinase.